We begin with the raw amino-acid sequence, 299 residues long: Acetylglutamate kinase (299 aa).

Residues 70–71, arginine 92, and asparagine 186 each bind substrate; that span reads GG.

Belongs to the acetylglutamate kinase family. ArgB subfamily.

It localises to the cytoplasm. The enzyme catalyses N-acetyl-L-glutamate + ATP = N-acetyl-L-glutamyl 5-phosphate + ADP. Its pathway is amino-acid biosynthesis; L-arginine biosynthesis; N(2)-acetyl-L-ornithine from L-glutamate: step 2/4. Its function is as follows. Catalyzes the ATP-dependent phosphorylation of N-acetyl-L-glutamate. In Petrotoga mobilis (strain DSM 10674 / SJ95), this protein is Acetylglutamate kinase.